A 488-amino-acid chain; its full sequence is Ribulose bisphosphate carboxylase large chain (488 aa).

Residues N127 and T177 each contribute to the substrate site. K179 acts as the Proton acceptor in catalysis. Position 181 (K181) interacts with substrate. The Mg(2+) site is built by K205, D207, and E208. Residue K205 is modified to N6-carboxylysine. The active-site Proton acceptor is the H297. Positions 298, 330, and 382 each coordinate substrate.

Belongs to the RuBisCO large chain family. Type I subfamily. As to quaternary structure, heterohexadecamer of 8 large chains and 8 small chains. Requires Mg(2+) as cofactor.

It is found in the plastid. The protein localises to the chloroplast. The catalysed reaction is 2 (2R)-3-phosphoglycerate + 2 H(+) = D-ribulose 1,5-bisphosphate + CO2 + H2O. It carries out the reaction D-ribulose 1,5-bisphosphate + O2 = 2-phosphoglycolate + (2R)-3-phosphoglycerate + 2 H(+). In terms of biological role, ruBisCO catalyzes two reactions: the carboxylation of D-ribulose 1,5-bisphosphate, the primary event in carbon dioxide fixation, as well as the oxidative fragmentation of the pentose substrate in the photorespiration process. Both reactions occur simultaneously and in competition at the same active site. In Porphyra umbilicalis (Purple laver), this protein is Ribulose bisphosphate carboxylase large chain (rbcL).